A 273-amino-acid chain; its full sequence is tRNA pseudouridine synthase A (273 aa).

Residue Asp52 is the Nucleophile of the active site. Substrate is bound at residue Tyr110.

The protein belongs to the tRNA pseudouridine synthase TruA family. In terms of assembly, homodimer.

It carries out the reaction uridine(38/39/40) in tRNA = pseudouridine(38/39/40) in tRNA. Formation of pseudouridine at positions 38, 39 and 40 in the anticodon stem and loop of transfer RNAs. The polypeptide is tRNA pseudouridine synthase A (Cupriavidus pinatubonensis (strain JMP 134 / LMG 1197) (Cupriavidus necator (strain JMP 134))).